The sequence spans 121 residues: MRVEETEVFKKYFKNLTDRERAVFEGGITLGALFHQFVGTPVSKYNKESLERAIEEAMKNQPCVYDIKVKIRNVGEKYVSLDGKMLDVDLKIKINKTVAHLKLEYIPEIDYPLMYVKKFEE.

Positions 25 and 114 each coordinate substrate.

The protein belongs to the archaeal dihydroneopterin aldolase family. In terms of assembly, homotetramer.

It catalyses the reaction 7,8-dihydroneopterin = 6-hydroxymethyl-7,8-dihydropterin + glycolaldehyde. It participates in cofactor biosynthesis; 5,6,7,8-tetrahydromethanopterin biosynthesis. In terms of biological role, catalyzes the conversion of 7,8-dihydroneopterin (H2Neo) to 6-hydroxymethyl-7,8-dihydropterin (6-HMD). The polypeptide is Dihydroneopterin aldolase (Methanocaldococcus jannaschii (strain ATCC 43067 / DSM 2661 / JAL-1 / JCM 10045 / NBRC 100440) (Methanococcus jannaschii)).